Here is a 205-residue protein sequence, read N- to C-terminus: High frequency lysogenization protein HflD homolog (205 aa).

Belongs to the HflD family.

The protein localises to the cytoplasm. The protein resides in the cell inner membrane. This Vibrio vulnificus (strain CMCP6) protein is High frequency lysogenization protein HflD homolog.